Here is a 908-residue protein sequence, read N- to C-terminus: SKI/DACH domain-containing protein 1 (908 aa).

Over residues 337-353 (HHHHHHHHHHHHHHHRA) the composition is skewed to basic residues. The segment at 337–461 (HHHHHHHHHH…SSSGSSQVSV (125 aa)) is disordered. 2 stretches are compositionally biased toward low complexity: residues 370-389 (PHLG…SSYS) and 396-410 (SDFG…NSVS). Residues 411–429 (SEEEEEEGEEEEEEEEEEG) are compositionally biased toward acidic residues. Residues 449 to 461 (ESDSSSGSSQVSV) are compositionally biased toward low complexity. Lys-688 is covalently cross-linked (Glycyl lysine isopeptide (Lys-Gly) (interchain with G-Cter in SUMO2)). Disordered stretches follow at residues 744-763 (ETPS…TLGS) and 792-818 (LQTP…TNEG). The segment covering 746 to 761 (PSLNPLAQSQGLSCTL) has biased composition (polar residues).

This sequence belongs to the DACH/dachshund family.

The polypeptide is SKI/DACH domain-containing protein 1 (SKIDA1) (Homo sapiens (Human)).